The following is a 603-amino-acid chain: Sesquiterpene synthase Cad (603 aa).

Residues 1-13 are compositionally biased toward polar residues; sequence MAEVGLSQNSYAS. The segment at 1–23 is disordered; the sequence is MAEVGLSQNSYASANHDKKSEQQ. Mg(2+) is bound by residues aspartate 357, aspartate 361, aspartate 498, and glutamate 506. The DDXXD motif motif lies at 357 to 361; that stretch reads DDIFD.

The protein belongs to the terpene synthase family. Tpsa subfamily. Mg(2+) is required as a cofactor. It depends on Mn(2+) as a cofactor. In terms of tissue distribution, mostly expressed in leaves and, to a lower extent, in stems and xylem.

The enzyme catalyses (2E,6E)-farnesyl diphosphate = beta-cadinene + diphosphate. The protein operates within secondary metabolite biosynthesis; terpenoid biosynthesis. Functionally, sesquiterpene synthase involved in the biosynthesis of volatile compounds. Mediates the conversion of (2E,6E)-farnesyl diphosphate (FPP) into beta-cadinene. Not active with geranyl diphosphate (GPP) and geranylgeranyl diphosphate (GGPP) as substrates. The sequence is that of Sesquiterpene synthase Cad from Chamaecyparis formosensis (Formosan cypress).